The sequence spans 421 residues: Serine hydroxymethyltransferase (421 aa).

(6S)-5,6,7,8-tetrahydrofolate contacts are provided by residues Leu121 and 125–127 (GHL). Lys230 is subject to N6-(pyridoxal phosphate)lysine. 355-357 (SPF) contacts (6S)-5,6,7,8-tetrahydrofolate.

It belongs to the SHMT family. Homodimer. Pyridoxal 5'-phosphate is required as a cofactor.

The protein localises to the cytoplasm. The catalysed reaction is (6R)-5,10-methylene-5,6,7,8-tetrahydrofolate + glycine + H2O = (6S)-5,6,7,8-tetrahydrofolate + L-serine. It functions in the pathway one-carbon metabolism; tetrahydrofolate interconversion. The protein operates within amino-acid biosynthesis; glycine biosynthesis; glycine from L-serine: step 1/1. In terms of biological role, catalyzes the reversible interconversion of serine and glycine with tetrahydrofolate (THF) serving as the one-carbon carrier. This reaction serves as the major source of one-carbon groups required for the biosynthesis of purines, thymidylate, methionine, and other important biomolecules. Also exhibits THF-independent aldolase activity toward beta-hydroxyamino acids, producing glycine and aldehydes, via a retro-aldol mechanism. This is Serine hydroxymethyltransferase from Cellvibrio japonicus (strain Ueda107) (Pseudomonas fluorescens subsp. cellulosa).